A 292-amino-acid polypeptide reads, in one-letter code: Histamine N-methyltransferase (292 aa).

Substrate is bound at residue Glu28. Residues Gly60, Glu89, Gln94, Ser120, and Ile142 each coordinate S-adenosyl-L-methionine. Substrate is bound at residue Asn283.

It belongs to the class I-like SAM-binding methyltransferase superfamily. HNMT family. Monomer.

The protein resides in the cytoplasm. It catalyses the reaction histamine + S-adenosyl-L-methionine = N(tau)-methylhistamine + S-adenosyl-L-homocysteine + H(+). Inactivates histamine by N-methylation. Plays an important role in degrading histamine and in regulating the airway response to histamine. This Pongo abelii (Sumatran orangutan) protein is Histamine N-methyltransferase (HNMT).